An 89-amino-acid chain; its full sequence is UPF0297 protein MGAS9429_Spy1808 (89 aa).

The protein belongs to the UPF0297 family.

The chain is UPF0297 protein MGAS9429_Spy1808 from Streptococcus pyogenes serotype M12 (strain MGAS9429).